Consider the following 410-residue polypeptide: 23S rRNA (uracil(747)-C(5))-methyltransferase (410 aa).

4 residues coordinate [4Fe-4S] cluster: Cys61, Cys67, Cys70, and Cys137. S-adenosyl-L-methionine is bound by residues Gln253, Tyr279, Glu300, and Asp341. Cys367 functions as the Nucleophile in the catalytic mechanism.

Belongs to the class I-like SAM-binding methyltransferase superfamily. RNA M5U methyltransferase family.

The catalysed reaction is uridine(747) in 23S rRNA + S-adenosyl-L-methionine = 5-methyluridine(747) in 23S rRNA + S-adenosyl-L-homocysteine + H(+). Its activity is regulated as follows. Activated by magnesium ions. Catalyzes the formation of 5-methyl-uridine at position equivalent to 747 (m5U747) in 23S rRNA (m5U859 in the P.abyssi numbering). The chain is 23S rRNA (uracil(747)-C(5))-methyltransferase from Pyrococcus abyssi (strain GE5 / Orsay).